A 360-amino-acid polypeptide reads, in one-letter code: Phospho-N-acetylmuramoyl-pentapeptide-transferase (360 aa).

The next 10 membrane-spanning stretches (helical) occupy residues 26-46, 74-94, 97-117, 132-152, 168-188, 199-219, 236-256, 263-283, 288-308, and 338-358; these read AILALLTALMFSLWWGPKLIE, MGGLLILAGIFIGVLLWGDLG, YVWVMLFVLGSFGLIGFIDDY, WKYIFQSLAALVVAFYLFYST, ILPQLGLMFIVLTYFTIVGAS, GLAIMPTVMVAAAFALIAYLS, SGELVIVCTAIVGAGLGFLWF, VFMGDVGSLSLGAALGTIAVL, ILLVIMGGVFVMETLSVILQV, and VIVRFWIISLFLVLLGLATLK.

The protein belongs to the glycosyltransferase 4 family. MraY subfamily. The cofactor is Mg(2+).

It localises to the cell inner membrane. The enzyme catalyses UDP-N-acetyl-alpha-D-muramoyl-L-alanyl-gamma-D-glutamyl-meso-2,6-diaminopimeloyl-D-alanyl-D-alanine + di-trans,octa-cis-undecaprenyl phosphate = di-trans,octa-cis-undecaprenyl diphospho-N-acetyl-alpha-D-muramoyl-L-alanyl-D-glutamyl-meso-2,6-diaminopimeloyl-D-alanyl-D-alanine + UMP. The protein operates within cell wall biogenesis; peptidoglycan biosynthesis. Its function is as follows. Catalyzes the initial step of the lipid cycle reactions in the biosynthesis of the cell wall peptidoglycan: transfers peptidoglycan precursor phospho-MurNAc-pentapeptide from UDP-MurNAc-pentapeptide onto the lipid carrier undecaprenyl phosphate, yielding undecaprenyl-pyrophosphoryl-MurNAc-pentapeptide, known as lipid I. The chain is Phospho-N-acetylmuramoyl-pentapeptide-transferase from Shewanella amazonensis (strain ATCC BAA-1098 / SB2B).